The following is a 235-amino-acid chain: MAIYRLPREVSFPDPDLAEPDGLLAVGGDLSPERLLTAYAAGIFPWYGEDTPILWWSPDPRLVLEPERLHVSASLARTIRRGRYRVTADRAFEDVVRRCAGRARPGQDGTWIVPEMIDAYVRLHRLGFAHSFEAWEGEALAGGLYGVSLGGAFFGESMFADRPDASKVAFVRSVEWLARWDVRLIDCQVRTEHLARFGAREIPRAEFLARLGRALDRPTLRGRWDLDAGDRPAGA.

It belongs to the L/F-transferase family.

The protein resides in the cytoplasm. It carries out the reaction N-terminal L-lysyl-[protein] + L-leucyl-tRNA(Leu) = N-terminal L-leucyl-L-lysyl-[protein] + tRNA(Leu) + H(+). It catalyses the reaction N-terminal L-arginyl-[protein] + L-leucyl-tRNA(Leu) = N-terminal L-leucyl-L-arginyl-[protein] + tRNA(Leu) + H(+). The catalysed reaction is L-phenylalanyl-tRNA(Phe) + an N-terminal L-alpha-aminoacyl-[protein] = an N-terminal L-phenylalanyl-L-alpha-aminoacyl-[protein] + tRNA(Phe). Functions in the N-end rule pathway of protein degradation where it conjugates Leu, Phe and, less efficiently, Met from aminoacyl-tRNAs to the N-termini of proteins containing an N-terminal arginine or lysine. The polypeptide is Leucyl/phenylalanyl-tRNA--protein transferase (Anaeromyxobacter sp. (strain Fw109-5)).